The primary structure comprises 159 residues: Transcriptional repressor NrdR (159 aa).

Residues 3 to 34 (CPFCEYNGTRVLDSRPFNHNKSIRRRRECEAC) fold into a zinc finger. One can recognise an ATP-cone domain in the interval 49–139 (LLIVKKDGTR…VYRQFKDINV (91 aa)).

It belongs to the NrdR family. It depends on Zn(2+) as a cofactor.

Its function is as follows. Negatively regulates transcription of bacterial ribonucleotide reductase nrd genes and operons by binding to NrdR-boxes. The polypeptide is Transcriptional repressor NrdR (Brevibacillus brevis (strain 47 / JCM 6285 / NBRC 100599)).